The chain runs to 96 residues: Basic blue protein (96 aa).

The region spanning 1 to 96 (AVYVVGGSGG…SGMKIAVNAL (96 aa)) is the Phytocyanin domain. Residues histidine 39, cysteine 79, histidine 84, and methionine 89 each contribute to the Cu cation site. Cysteine 52 and cysteine 85 form a disulfide bridge.

The chain is Basic blue protein from Cucumis sativus (Cucumber).